Consider the following 371-residue polypeptide: Enterobactin C-glucosyltransferase (371 aa).

This sequence belongs to the glycosyltransferase 28 family.

It localises to the cytoplasm. It carries out the reaction enterobactin + UDP-alpha-D-glucose = monoglucosyl-enterobactin + UDP. The catalysed reaction is monoglucosyl-enterobactin + UDP-alpha-D-glucose = diglucosyl-enterobactin + UDP + H(+). It catalyses the reaction diglucosyl-enterobactin + UDP-alpha-D-glucose = triglucosyl-enterobactin + UDP + H(+). It functions in the pathway siderophore biosynthesis; enterobactin biosynthesis. Catalyzes the successive monoglucosylation, diglucosylation and triglucosylation of enterobactin (Ent). Transfers glucosyl groups from uridine-5'-diphosphoglucose (UDP-Glc) to C5 of one, two or three of the 2,3-dihydroxybenzoyl (DHB) units of Ent to yield monoglucosyl-C-Ent (MGE), diglucosyl-C-Ent (DGE) and triglucosyl-C-Ent (TGE). Glucosylation decreases the membrane affinity of Ent and increases the iron acquisition rate. The sequence is that of Enterobactin C-glucosyltransferase from Escherichia coli O6:H1 (strain CFT073 / ATCC 700928 / UPEC).